Reading from the N-terminus, the 208-residue chain is Small ribosomal subunit protein uS4 (208 aa).

The S4 RNA-binding domain maps to Ser98–Glu178.

Belongs to the universal ribosomal protein uS4 family. Part of the 30S ribosomal subunit. Contacts protein S5. The interaction surface between S4 and S5 is involved in control of translational fidelity.

Its function is as follows. One of the primary rRNA binding proteins, it binds directly to 16S rRNA where it nucleates assembly of the body of the 30S subunit. In terms of biological role, with S5 and S12 plays an important role in translational accuracy. This is Small ribosomal subunit protein uS4 from Acetivibrio thermocellus (strain ATCC 27405 / DSM 1237 / JCM 9322 / NBRC 103400 / NCIMB 10682 / NRRL B-4536 / VPI 7372) (Clostridium thermocellum).